Here is a 263-residue protein sequence, read N- to C-terminus: 3-deoxy-manno-octulosonate cytidylyltransferase (263 aa).

The protein belongs to the KdsB family.

The protein resides in the cytoplasm. The enzyme catalyses 3-deoxy-alpha-D-manno-oct-2-ulosonate + CTP = CMP-3-deoxy-beta-D-manno-octulosonate + diphosphate. It participates in nucleotide-sugar biosynthesis; CMP-3-deoxy-D-manno-octulosonate biosynthesis; CMP-3-deoxy-D-manno-octulosonate from 3-deoxy-D-manno-octulosonate and CTP: step 1/1. It functions in the pathway bacterial outer membrane biogenesis; lipopolysaccharide biosynthesis. Its function is as follows. Activates KDO (a required 8-carbon sugar) for incorporation into bacterial lipopolysaccharide in Gram-negative bacteria. The chain is 3-deoxy-manno-octulosonate cytidylyltransferase from Burkholderia multivorans (strain ATCC 17616 / 249).